Here is a 1000-residue protein sequence, read N- to C-terminus: C-module-binding factor A (1000 aa).

One can recognise a JmjC domain in the interval 113-280 (PREWQEYLSH…ISYFSSLPHT (168 aa)). A PHD-type; atypical zinc finger spans residues 489 to 544 (KIKCHRCEKRFKKFSIIFCTNCNARFCEQCVVNTFGQNFQVLMKRNEWECFCCKGL). The segment at 492 to 542 (CHRCEKRFKKFSIIFCTNCNARFCEQCVVNTFGQNFQVLMKRNEWECFCCK) adopts an RING-type; degenerate zinc-finger fold. Disordered regions lie at residues 561 to 647 (RILN…SSYS) and 660 to 818 (SYGS…KNLK). Composition is skewed to low complexity over residues 574 to 647 (NNNN…SSYS), 660 to 683 (SYGS…NNNN), 700 to 710 (SSSSGSGSSNS), 732 to 751 (NNNN…NNHH), and 760 to 789 (NNNN…STST). Residues 805–818 (DNDKPKGRPPKNLK) show a composition bias toward basic and acidic residues. Residues 810-818 (KGRPPKNLK) constitute a DNA-binding region (a.T hook).

Monomer.

It is found in the nucleus. In terms of biological role, transcriptional regulator involved in phagocytosis and pinocytosis. Both activates and represses transcription. Regulates expression of acaA, carA, pkaC, csaA, cotB and lagC. Promotes amplification of the tRNA gene-associated retrotransposon TRE5-A, a mobile genetic element formerly called as Dictyostelium repetitive element (DRE). Suppresses agnC and agnE encoding argonaute proteins which are part of a RNA interference pathway controlling TRE5-A amplification. Required for amplification of both sense and antisense RNA transcripts, but does not activate their promoters found in A-module and C-module of the TRE5-A, respectively. Nevertheless, binds to distinct DNA sequences containing A and T stretches within the C-module in vitro. The polypeptide is C-module-binding factor A (Dictyostelium discoideum (Social amoeba)).